The following is a 118-amino-acid chain: Ribonuclease P protein component (118 aa).

The protein belongs to the RnpA family. Consists of a catalytic RNA component (M1 or rnpB) and a protein subunit.

It carries out the reaction Endonucleolytic cleavage of RNA, removing 5'-extranucleotides from tRNA precursor.. RNaseP catalyzes the removal of the 5'-leader sequence from pre-tRNA to produce the mature 5'-terminus. It can also cleave other RNA substrates such as 4.5S RNA. The protein component plays an auxiliary but essential role in vivo by binding to the 5'-leader sequence and broadening the substrate specificity of the ribozyme. This is Ribonuclease P protein component from Shewanella baltica (strain OS155 / ATCC BAA-1091).